Here is a 436-residue protein sequence, read N- to C-terminus: MMATQTLSIDSYQDGQQMQVVTELKTEQDPNCSEPDAEGVSPPPVESQTPMDVDKQAIYRHPLFPLLALLFEKCEQSTQGSEGTTSASFDVDIENFVRKQEKEGKPFFCEDPETDNLMVKAIQVLRIHLLELEKVNELCKDFCSRYIACLKTKMNSETLLSGEPGSPYSPVQSQQIQSAITGTISPQGIVVPASALQQGNVAMATVAGGTVYQPVTVVTPQGQVVTQTLSPGTIRIQNSQLQLQLNQDLSILHQDDGSSKNKRGVLPKHATNVMRSWLFQHIGHPYPTEDEKKQIAAQTNLTLLQVNNWFINARRRILQPMLDSSCSETPKTKKKTAQNRPVQRFWPDSIASGVAQPPPSELTMSEGAVVTITTPVNMNVDSLQSLSSDGATLAVQQVMMAGQSEDESVDSTEEDAGALAPAHISGLVLENSDSLQ.

Residues 1 to 20 show a composition bias toward polar residues; the sequence is MMATQTLSIDSYQDGQQMQV. The tract at residues 1–49 is disordered; it reads MMATQTLSIDSYQDGQQMQVVTELKTEQDPNCSEPDAEGVSPPPVESQT. 2 positions are modified to phosphoserine: Ser33 and Ser41. An MEIS N-terminal domain is found at 80–163; sequence GSEGTTSASF…MNSETLLSGE (84 aa). The homeobox; TALE-type DNA-binding region spans 259–321; sequence SKNKRGVLPK…NARRRILQPM (63 aa). A disordered region spans residues 401 to 436; it reads AGQSEDESVDSTEEDAGALAPAHISGLVLENSDSLQ. Over residues 404–416 the composition is skewed to acidic residues; the sequence is SEDESVDSTEEDA.

It belongs to the TALE/MEIS homeobox family. Interacts with MN1. As to expression, ubiquitous. Isoform 2 is expressed in all examined tissues except in bone marrow.

It localises to the nucleus. Its function is as follows. Activates transcription in the presence of PBX1A and HOXA1. The polypeptide is Homeobox protein PKNOX1 (Homo sapiens (Human)).